Consider the following 202-residue polypeptide: Small ribosomal subunit protein uS4c (202 aa).

Residues 90–158 (MRLDNIIFRL…ITKNIELSQK (69 aa)) enclose the S4 RNA-binding domain.

The protein belongs to the universal ribosomal protein uS4 family. In terms of assembly, part of the 30S ribosomal subunit. Contacts protein S5. The interaction surface between S4 and S5 is involved in control of translational fidelity.

The protein resides in the plastid. It is found in the chloroplast. One of the primary rRNA binding proteins, it binds directly to 16S rRNA where it nucleates assembly of the body of the 30S subunit. In terms of biological role, with S5 and S12 plays an important role in translational accuracy. The polypeptide is Small ribosomal subunit protein uS4c (rps4) (Marchantia romanica (Liverwort)).